The sequence spans 254 residues: 3-deoxy-manno-octulosonate cytidylyltransferase (254 aa).

Belongs to the KdsB family.

Its subcellular location is the cytoplasm. The catalysed reaction is 3-deoxy-alpha-D-manno-oct-2-ulosonate + CTP = CMP-3-deoxy-beta-D-manno-octulosonate + diphosphate. Its pathway is nucleotide-sugar biosynthesis; CMP-3-deoxy-D-manno-octulosonate biosynthesis; CMP-3-deoxy-D-manno-octulosonate from 3-deoxy-D-manno-octulosonate and CTP: step 1/1. It participates in bacterial outer membrane biogenesis; lipopolysaccharide biosynthesis. Functionally, activates KDO (a required 8-carbon sugar) for incorporation into bacterial lipopolysaccharide in Gram-negative bacteria. The polypeptide is 3-deoxy-manno-octulosonate cytidylyltransferase (Pseudomonas aeruginosa (strain UCBPP-PA14)).